The following is an 848-amino-acid chain: Aryl hydrocarbon receptor (848 aa).

A propeptide spanning residues 1–9 (MSSGANITY) is cleaved from the precursor. The disordered stretch occupies residues 1–38 (MSSGANITYASRKRRKPVQKTVKPIPAEGIKSNPSKRH). 2 short sequence motifs (nuclear localization signal) span residues 12-15 (RKRR) and 36-41 (KRHRDR). Positions 26–79 (PAEGIKSNPSKRHRDRLNTELDRLASLLPFPQDVINKLDKLSVLRLSVSYLRAK) constitute a bHLH domain. The segment at 37–65 (RHRDRLNTELDRLASLLPFPQDVINKLDK) is DNA-binding. Required for maintaining the overall integrity of the AHR:ARNT heterodimer and its transcriptional activity stretches follow at residues 49–81 (LASLLPFPQDVINKLDKLSVLRLSVSYLRAKSF), 116–124 (LLQALNGFV), and 260–262 (FAI). Residues 63–71 (LDKLSVLRL) carry the Nuclear export signal motif. The PAS 1 domain maps to 116 to 179 (LLQALNGFVL…RQLHWALNPD (64 aa)). Positions 269-336 (PSILEIRTKN…CAESHIRMIK (68 aa)) constitute a PAS 2 domain. Residues 342–380 (MTVFRLFAKHSRWRWVQSNARLIYRNGRPDYIIATQRPL) enclose the PAC domain. Positions 421-449 (LPIRTKSNTSRKDWAPQSTPSKDSFHPSS) are disordered. Residues 436–449 (PQSTPSKDSFHPSS) show a composition bias toward polar residues.

As to quaternary structure, homodimer. Heterodimer; efficient DNA binding requires dimerization with another bHLH protein. Interacts with ARNT; the heterodimer ARNT:AHR binds to core DNA sequence 5'-TGCGTG-3' within the dioxin response element (DRE) of target gene promoters and activates their transcription. Binds MYBBP1A. Interacts with coactivators including SRC-1, RIP140 and NOCA7, and with the corepressor SMRT. Interacts with NEDD8 and IVNS1ABP. Interacts with BMAL1. Interacts with HSP90AB1. Interacts with TIPARP; leading to mono-ADP-ribosylation of AHR and subsequent inhibition of AHR. In terms of processing, mono-ADP-ribosylated, leading to inhibit transcription activator activity of AHR. Expressed in all tissues tested including brain, heart, kidney, liver, lung, muscle, ovary, skin, spleen and thymus.

It is found in the cytoplasm. It localises to the nucleus. In terms of biological role, ligand-activated transcription factor that enables cells to adapt to changing conditions by sensing compounds from the environment, diet, microbiome and cellular metabolism, and which plays important roles in development, immunity and cancer. Upon ligand binding, translocates into the nucleus, where it heterodimerizes with ARNT and induces transcription by binding to xenobiotic response elements (XRE). Regulates a variety of biological processes, including angiogenesis, hematopoiesis, drug and lipid metabolism, cell motility and immune modulation. Xenobiotics can act as ligands: upon xenobiotic-binding, activates the expression of multiple phase I and II xenobiotic chemical metabolizing enzyme genes (such as the CYP1A1 gene). Mediates biochemical and toxic effects of halogenated aromatic hydrocarbons. Next to xenobiotics, natural ligands derived from plants, microbiota, and endogenous metabolism are potent AHR agonists. Tryptophan (Trp) derivatives constitute an important class of endogenous AHR ligands. Acts as a negative regulator of anti-tumor immunity: indoles and kynurenic acid generated by Trp catabolism act as ligand and activate AHR, thereby promoting AHR-driven cancer cell motility and suppressing adaptive immunity. Regulates the circadian clock by inhibiting the basal and circadian expression of the core circadian component PER1. Inhibits PER1 by repressing the CLOCK-BMAL1 heterodimer mediated transcriptional activation of PER1. The heterodimer ARNT:AHR binds to core DNA sequence 5'-TGCGTG-3' within the dioxin response element (DRE) of target gene promoters and activates their transcription. The protein is Aryl hydrocarbon receptor (Ahr) of Mus musculus (Mouse).